The primary structure comprises 197 residues: uncharacterized protein (197 aa).

A helical transmembrane segment spans residues 7–27; it reads PISVGQMVLICIFILIILFVI.

Belongs to the IIV-6 307L family.

The protein localises to the membrane. This is an uncharacterized protein from Acheta domesticus (House cricket).